A 331-amino-acid chain; its full sequence is GTP 3',8-cyclase (331 aa).

A Radical SAM core domain is found at 9–233 (SFGRQVTYVR…TATNEHTGGP (225 aa)). Residue Arg-18 coordinates GTP. [4Fe-4S] cluster-binding residues include Cys-25 and Cys-29. Tyr-31 provides a ligand contact to S-adenosyl-L-methionine. A [4Fe-4S] cluster-binding site is contributed by Cys-32. A GTP-binding site is contributed by Arg-67. Position 71 (Gly-71) interacts with S-adenosyl-L-methionine. Thr-98 is a GTP binding site. Ser-122 contacts S-adenosyl-L-methionine. Position 159 (Lys-159) interacts with GTP. Met-193 is a binding site for S-adenosyl-L-methionine. Positions 257 and 260 each coordinate [4Fe-4S] cluster. A GTP-binding site is contributed by 262–264 (RVR). Residue Cys-274 coordinates [4Fe-4S] cluster.

It belongs to the radical SAM superfamily. MoaA family. Monomer and homodimer. It depends on [4Fe-4S] cluster as a cofactor.

The catalysed reaction is GTP + AH2 + S-adenosyl-L-methionine = (8S)-3',8-cyclo-7,8-dihydroguanosine 5'-triphosphate + 5'-deoxyadenosine + L-methionine + A + H(+). It participates in cofactor biosynthesis; molybdopterin biosynthesis. In terms of biological role, catalyzes the cyclization of GTP to (8S)-3',8-cyclo-7,8-dihydroguanosine 5'-triphosphate. This Saccharophagus degradans (strain 2-40 / ATCC 43961 / DSM 17024) protein is GTP 3',8-cyclase.